A 235-amino-acid polypeptide reads, in one-letter code: Protein FAM3B (235 aa).

The signal sequence occupies residues 1–29; it reads MRPLAGGLLKVVFVVFASLCAWYSGYLLA. Disulfide bonds link cysteine 63–cysteine 91 and cysteine 69–cysteine 229. The GG-type lectin domain occupies 72 to 233; it reads DTYAYRLLSG…IQIEGCIPKE (162 aa). Residues asparagine 120 and asparagine 208 are each glycosylated (N-linked (GlcNAc...) asparagine).

The protein belongs to the FAM3 family. Post-translationally, 2 N-termini have been observed in the mature protein: the first at Glu-30, resulting from signal peptide cleavage, the second at Ser-46. In terms of processing, O-glycosylated. Highly expressed in the pancreas. Also found in the colon, kidney, prostate, small intestine and testis.

It is found in the secreted. In terms of biological role, induces apoptosis of alpha and beta cells in a dose- and time-dependent manner. In Homo sapiens (Human), this protein is Protein FAM3B (FAM3B).